The following is a 276-amino-acid chain: uncharacterized protein (276 aa).

Positions Met1–Ala25 are cleaved as a signal peptide. Cys26 carries the N-palmitoyl cysteine lipid modification. A lipid anchor (S-diacylglycerol cysteine) is attached at Cys26.

It belongs to the MG439/MG440 family.

The protein resides in the cell membrane. This is an uncharacterized protein from Mycoplasma pneumoniae (strain ATCC 29342 / M129 / Subtype 1) (Mycoplasmoides pneumoniae).